Here is a 1140-residue protein sequence, read N- to C-terminus: GPI inositol-deacylase (1140 aa).

Residues 1-84 are disordered; it reads MHRRSSGSSP…TTWASHDPPR (84 aa). Residues 55–78 show a composition bias toward polar residues; it reads GKSTPRSRNSSTWRTLSSATTTWA. The N-linked (GlcNAc...) asparagine glycan is linked to Asn-63. The helical transmembrane segment at 117–137 threads the bilayer; the sequence is SCSILTALTTILACVFLFSIV. The active site involves Ser-304. The chain crosses the membrane as a helical span at residues 782–802; it reads LVMRYRTVFAAFPLLVVSLTL. Asn-862 carries N-linked (GlcNAc...) asparagine glycosylation. 7 helical membrane passes run 882–902, 905–925, 952–972, 1002–1022, 1039–1059, 1070–1090, and 1094–1114; these read AFFW…CVLL, VALI…SKSG, VLLV…VACI, SVFI…LVWA, VLSI…SMIP, SVLL…YAYI, and LVNI…GFSL.

The protein belongs to the GPI inositol-deacylase family.

It is found in the endoplasmic reticulum membrane. Involved in inositol deacylation of GPI-anchored proteins which plays important roles in the quality control and ER-associated degradation of GPI-anchored proteins. This is GPI inositol-deacylase (bst1) from Emericella nidulans (strain FGSC A4 / ATCC 38163 / CBS 112.46 / NRRL 194 / M139) (Aspergillus nidulans).